The following is a 427-amino-acid chain: Enolase (427 aa).

Q163 is a binding site for (2R)-2-phosphoglycerate. E205 functions as the Proton donor in the catalytic mechanism. Mg(2+) contacts are provided by D242, E285, and D312. 4 residues coordinate (2R)-2-phosphoglycerate: K337, R366, S367, and K388. K337 (proton acceptor) is an active-site residue.

Belongs to the enolase family. Mg(2+) is required as a cofactor.

It is found in the cytoplasm. The protein localises to the secreted. Its subcellular location is the cell surface. It carries out the reaction (2R)-2-phosphoglycerate = phosphoenolpyruvate + H2O. Its pathway is carbohydrate degradation; glycolysis; pyruvate from D-glyceraldehyde 3-phosphate: step 4/5. In terms of biological role, catalyzes the reversible conversion of 2-phosphoglycerate (2-PG) into phosphoenolpyruvate (PEP). It is essential for the degradation of carbohydrates via glycolysis. This chain is Enolase, found in Leptothrix cholodnii (strain ATCC 51168 / LMG 8142 / SP-6) (Leptothrix discophora (strain SP-6)).